The sequence spans 254 residues: uncharacterized protein (254 aa).

NADP(+) is bound by residues Ile18, Ser37, Asp63, Asn90, Tyr159, Lys163, Val192, and Thr194. The Proton donor role is filled by Tyr159. Lys163 (lowers pKa of active site Tyr) is an active-site residue.

The protein belongs to the short-chain dehydrogenases/reductases (SDR) family.

It localises to the cytoplasm. The protein localises to the nucleus. This is an uncharacterized protein from Schizosaccharomyces pombe (strain 972 / ATCC 24843) (Fission yeast).